Here is a 181-residue protein sequence, read N- to C-terminus: Malignant T-cell-amplified sequence 1 (181 aa).

Residue Thr81 is modified to Phosphothreonine; by MAPK1 and MAPK3. Residues 92–171 (LPHQQVDKGA…IGIENIHYLN (80 aa)) enclose the PUA domain. Phosphoserine; by CDK1 is present on Ser118.

The protein belongs to the MCTS1 family. In terms of assembly, interacts (via PUA domain) with DENR; the complex regulates translation reinitiation. Phosphorylation is critical for stabilization and promotion of cell proliferation. As to expression, ubiquitous. Over-expressed in T-cell lymphoid cell lines and in non-Hodgkin lymphoma cell lines as well as in a subset of primary large B-cell lymphomas.

Its subcellular location is the cytoplasm. Functionally, translation regulator forming a complex with DENR to promote translation reinitiation. Translation reinitiation is the process where the small ribosomal subunit remains attached to the mRNA following termination of translation of a regulatory upstream ORF (uORF), and resume scanning on the same mRNA molecule to initiate translation of a downstream ORF, usually the main ORF (mORF). The MCTS1/DENR complex is pivotal to two linked mechanisms essential for translation reinitiation. Firstly, the dissociation of deacylated tRNAs from post-termination 40S ribosomal complexes during ribosome recycling. Secondly, the recruitment in an EIF2-independent manner of aminoacylated initiator tRNA to P site of 40S ribosomes for a new round of translation. This regulatory mechanism governs the translation of more than 150 genes which translation reinitiation is MCTS1/DENR complex-dependent. Consequently, modulates various unrelated biological processes including cell cycle regulation and DNA damage signaling and repair. Notably, it positively regulates interferon gamma immunity to mycobacteria by enhancing the translation of JAK2. The polypeptide is Malignant T-cell-amplified sequence 1 (MCTS1) (Homo sapiens (Human)).